Here is a 199-residue protein sequence, read N- to C-terminus: ATP-dependent Clp protease proteolytic subunit 2 (199 aa).

The active-site Nucleophile is Ser-98. His-123 is a catalytic residue.

This sequence belongs to the peptidase S14 family. In terms of assembly, fourteen ClpP subunits assemble into 2 heptameric rings which stack back to back to give a disk-like structure with a central cavity, resembling the structure of eukaryotic proteasomes.

It is found in the cytoplasm. It catalyses the reaction Hydrolysis of proteins to small peptides in the presence of ATP and magnesium. alpha-casein is the usual test substrate. In the absence of ATP, only oligopeptides shorter than five residues are hydrolyzed (such as succinyl-Leu-Tyr-|-NHMec, and Leu-Tyr-Leu-|-Tyr-Trp, in which cleavage of the -Tyr-|-Leu- and -Tyr-|-Trp bonds also occurs).. Its function is as follows. Cleaves peptides in various proteins in a process that requires ATP hydrolysis. Has a chymotrypsin-like activity. Plays a major role in the degradation of misfolded proteins. This is ATP-dependent Clp protease proteolytic subunit 2 from Treponema pallidum (strain Nichols).